Here is a 390-residue protein sequence, read N- to C-terminus: Substance-K receptor (390 aa).

The Extracellular portion of the chain corresponds to 1-32 (MGTRAIVSDANILSGLESNATGVTAFSMPGWQ). Asn19 carries an N-linked (GlcNAc...) asparagine glycan. A helical transmembrane segment spans residues 33–56 (LALWATAYLALVLVAVTGNATVIW). Residues 57-69 (IILAHERMRTVTN) are Cytoplasmic-facing. A helical membrane pass occupies residues 70 to 90 (YFIINLALADLCMAAFNATFN). Residues 91 to 107 (FIYASHNIWYFGRAFCY) lie on the Extracellular side of the membrane. A disulfide bridge links Cys106 with Cys181. Residues 108–129 (FQNLFPITAMFVSIYSMTAIAA) form a helical membrane-spanning segment. Residues 130 to 149 (DRYMAIVHPFQPRLSAPSTK) are Cytoplasmic-facing. A helical transmembrane segment spans residues 150–170 (AIIAGIWLVALALASPQCFYS). Residues 171 to 196 (TITVDEGATKCVVAWPNDNGGKMLLL) are Extracellular-facing. The chain crosses the membrane as a helical span at residues 197–218 (YHLVVFVLIYFLPLLVMFGAYS). The Cytoplasmic segment spans residues 219–251 (VIGLTLWKRAVPRHQAHGANLRHLQAKKKFVKA). A helical transmembrane segment spans residues 252–272 (MVLVVLTFAICWLPYHLYFIL). Residues 273 to 290 (GTFQEDIYYHKFIQQVYL) are Extracellular-facing. Residues 291 to 310 (ALFWLAMSSTMYNPIIYCCL) form a helical membrane-spanning segment. The Cytoplasmic segment spans residues 311–390 (NHRFRSGFRL…PAGPICKAQA (80 aa)). Residue Cys324 is the site of S-palmitoyl cysteine attachment. A disordered region spans residues 365–390 (HSEATNGQVGSPQDGEPAGPICKAQA). Over residues 366-375 (SEATNGQVGS) the composition is skewed to polar residues.

It belongs to the G-protein coupled receptor 1 family.

The protein localises to the cell membrane. In terms of biological role, this is a receptor for the tachykinin neuropeptide substance K (neurokinin A). It is associated with G proteins that activate a phosphatidylinositol-calcium second messenger system. The rank order of affinity of this receptor to tachykinins is: substance K &gt; neuromedin-K &gt; substance P. This is Substance-K receptor (Tacr2) from Rattus norvegicus (Rat).